A 261-amino-acid chain; its full sequence is Arcelin-5B (261 aa).

The N-terminal stretch at 1 to 21 is a signal peptide; that stretch reads MASSKLLSLALFLVLLTHANS. N-linked (GlcNAc...) asparagine glycosylation is found at asparagine 91 and asparagine 100. The cysteines at positions 167 and 203 are disulfide-linked.

The protein belongs to the leguminous lectin family. In terms of assembly, monomer.

Its function is as follows. Seed storage. This carbohydrate-binding lectin has toxic effects on bean bruchid pests. In Phaseolus vulgaris (Kidney bean), this protein is Arcelin-5B (ARC5B).